The following is a 68-amino-acid chain: MKTKDYVQELNGLTTEQLLNREKELKEQLFNLRFQLATGQLENTASLKTVRKNIARVKTVLRQQELNN.

This sequence belongs to the universal ribosomal protein uL29 family.

The sequence is that of Large ribosomal subunit protein uL29 from Limosilactobacillus fermentum (strain NBRC 3956 / LMG 18251) (Lactobacillus fermentum).